We begin with the raw amino-acid sequence, 275 residues long: 2,3,4,5-tetrahydropyridine-2,6-dicarboxylate N-succinyltransferase (275 aa).

Substrate contacts are provided by Arg-106 and Asp-143.

The protein belongs to the transferase hexapeptide repeat family. Homotrimer.

Its subcellular location is the cytoplasm. The catalysed reaction is (S)-2,3,4,5-tetrahydrodipicolinate + succinyl-CoA + H2O = (S)-2-succinylamino-6-oxoheptanedioate + CoA. It participates in amino-acid biosynthesis; L-lysine biosynthesis via DAP pathway; LL-2,6-diaminopimelate from (S)-tetrahydrodipicolinate (succinylase route): step 1/3. This is 2,3,4,5-tetrahydropyridine-2,6-dicarboxylate N-succinyltransferase from Cupriavidus pinatubonensis (strain JMP 134 / LMG 1197) (Cupriavidus necator (strain JMP 134)).